Here is a 677-residue protein sequence, read N- to C-terminus: Forkhead box protein P1 (677 aa).

Polar residues predominate over residues 1–18; that stretch reads MMQESGTETKSNGSAIQN. A disordered region spans residues 1–43; the sequence is MMQESGTETKSNGSAIQNGSGGSNHLLECGGLREGRSNGETPA. Position 83 is a phosphoserine (Ser-83). Residues 270-283 are compositionally biased toward polar residues; sequence IMNPHASTNGQLSV. Residues 270–298 are disordered; it reads IMNPHASTNGQLSVHTPKRESLSHEEHPH. Positions 286–298 are enriched in basic and acidic residues; the sequence is PKRESLSHEEHPH. Residue Lys-287 forms a Glycyl lysine isopeptide (Lys-Gly) (interchain with G-Cter in SUMO2) linkage. The C2H2-type zinc-finger motif lies at 306–331; it reads GVCKWPGCEAVCEDFQSFLKHLNSEH. Positions 348 to 369 are leucine-zipper; sequence VQQLELQLAKDKERLQAMMTHL. Glycyl lysine isopeptide (Lys-Gly) (interchain with G-Cter in SUMO2) cross-links involve residues Lys-372 and Lys-377. The tract at residues 382–386 is CTBP1-binding; it reads PLNLV. Positions 390 to 403 are enriched in polar residues; that stretch reads TLSKSASEASPQSL. The tract at residues 390–422 is disordered; sequence TLSKSASEASPQSLPHTPTTPTAPLTPVTQGPS. Low complexity predominate over residues 404-418; that stretch reads PHTPTTPTAPLTPVT. Residue Lys-442 forms a Glycyl lysine isopeptide (Lys-Gly) (interchain with G-Cter in SUMO2) linkage. Residues 465–555 constitute a DNA-binding region (fork-head); it reads RPPFTYASLI…PQKISGNPSL (91 aa). A disordered region spans residues 611-677; that stretch reads EHTNSNESDS…EDEPVNEDME (67 aa). The segment covering 612–623 has biased composition (polar residues); that stretch reads HTNSNESDSSPG. Thr-653 carries the phosphothreonine modification. Ser-658 carries the post-translational modification Phosphoserine. Positions 667–677 are enriched in acidic residues; it reads YEDEPVNEDME.

As to quaternary structure, forms homodimers and heterodimers with FOXP2 and FOXP4. Dimerization is required for DNA-binding. Self-associates. Interacts with CTBP1. Interacts with NCOR2 and AR. Interacts with FOXP2. Interacts with TBR1. Interacts with AURKA; this interaction facilitates the phosphorylation of FOXP1, which suppresses the expression of FBXL7. Interacts with ZMYM2. As to expression, isoform 8 is specifically expressed in embryonic stem cells.

The protein resides in the nucleus. In terms of biological role, transcriptional repressor. Can act with CTBP1 to synergistically repress transcription but CTPBP1 is not essential. Plays an important role in the specification and differentiation of lung epithelium. Acts cooperatively with FOXP4 to regulate lung secretory epithelial cell fate and regeneration by restricting the goblet cell lineage program; the function may involve regulation of AGR2. Essential transcriptional regulator of B-cell development. Involved in regulation of cardiac muscle cell proliferation. Involved in the columnar organization of spinal motor neurons. Promotes the formation of the lateral motor neuron column (LMC) and the preganglionic motor column (PGC) and is required for respective appropriate motor axon projections. The segment-appropriate generation of spinal cord motor columns requires cooperation with other Hox proteins. Can regulate PITX3 promoter activity; may promote midbrain identity in embryonic stem cell-derived dopamine neurons by regulating PITX3. Negatively regulates the differentiation of T follicular helper cells T(FH)s. Involved in maintenance of hair follicle stem cell quiescence; the function probably involves regulation of FGF18. Represses transcription of various pro-apoptotic genes and cooperates with NF-kappa B-signaling in promoting B-cell expansion by inhibition of caspase-dependent apoptosis. Binds to CSF1R promoter elements and is involved in regulation of monocyte differentiation and macrophage functions; repression of CSF1R in monocytes seems to involve NCOR2 as corepressor. Involved in endothelial cell proliferation, tube formation and migration indicative for a role in angiogenesis; the role in neovascularization seems to implicate suppression of SEMA5B. Can negatively regulate androgen receptor signaling. Acts as a transcriptional activator of the FBXL7 promoter; this activity is regulated by AURKA. Involved in transcriptional regulation in embryonic stem cells (ESCs). Stimulates expression of transcription factors that are required for pluripotency and decreases expression of differentiation-associated genes. Has distinct DNA-binding specifities as compared to the canonical form and preferentially binds DNA with the sequence 5'-CGATACAA-3' (or closely related sequences). Promotes ESC self-renewal and pluripotency. The chain is Forkhead box protein P1 (FOXP1) from Homo sapiens (Human).